Consider the following 398-residue polypeptide: Tyrosine--tRNA ligase (398 aa).

The 'HIGH' region signature appears at 48 to 57; sequence PTGADIHLGH. The 'KMSKS' region motif lies at 235 to 239; that stretch reads KMSKS. Lys238 lines the ATP pocket. The S4 RNA-binding domain maps to 334 to 398; that stretch reads VKLAYLLGAT…GKNKFVRLVL (65 aa).

Belongs to the class-I aminoacyl-tRNA synthetase family. TyrS type 2 subfamily. As to quaternary structure, homodimer.

It localises to the cytoplasm. It carries out the reaction tRNA(Tyr) + L-tyrosine + ATP = L-tyrosyl-tRNA(Tyr) + AMP + diphosphate + H(+). Catalyzes the attachment of tyrosine to tRNA(Tyr) in a two-step reaction: tyrosine is first activated by ATP to form Tyr-AMP and then transferred to the acceptor end of tRNA(Tyr). This chain is Tyrosine--tRNA ligase, found in Trichormus variabilis (strain ATCC 29413 / PCC 7937) (Anabaena variabilis).